A 152-amino-acid chain; its full sequence is MLP-like protein 165 (152 aa).

Belongs to the MLP family.

In Arabidopsis thaliana (Mouse-ear cress), this protein is MLP-like protein 165 (MLP165).